The sequence spans 316 residues: D-alanine--D-alanine ligase (316 aa).

Residues K109–A304 enclose the ATP-grasp domain. A135–T190 provides a ligand contact to ATP. Residues D258, E271, and N273 each contribute to the Mg(2+) site.

The protein belongs to the D-alanine--D-alanine ligase family. The cofactor is Mg(2+). Requires Mn(2+) as cofactor.

It localises to the cytoplasm. It catalyses the reaction 2 D-alanine + ATP = D-alanyl-D-alanine + ADP + phosphate + H(+). It participates in cell wall biogenesis; peptidoglycan biosynthesis. Cell wall formation. The chain is D-alanine--D-alanine ligase from Nitrosococcus oceani (strain ATCC 19707 / BCRC 17464 / JCM 30415 / NCIMB 11848 / C-107).